A 422-amino-acid polypeptide reads, in one-letter code: Gamma-glutamyl phosphate reductase (422 aa).

Belongs to the gamma-glutamyl phosphate reductase family.

It is found in the cytoplasm. The catalysed reaction is L-glutamate 5-semialdehyde + phosphate + NADP(+) = L-glutamyl 5-phosphate + NADPH + H(+). It functions in the pathway amino-acid biosynthesis; L-proline biosynthesis; L-glutamate 5-semialdehyde from L-glutamate: step 2/2. Catalyzes the NADPH-dependent reduction of L-glutamate 5-phosphate into L-glutamate 5-semialdehyde and phosphate. The product spontaneously undergoes cyclization to form 1-pyrroline-5-carboxylate. This chain is Gamma-glutamyl phosphate reductase, found in Chloroflexus aggregans (strain MD-66 / DSM 9485).